The primary structure comprises 282 residues: Large ribosomal subunit protein uL2 (282 aa).

The segment at 215 to 282 (RHKGIRPTVR…IIRSRKETKK (68 aa)) is disordered. Residues 263 to 282 (RNPKKPSTKLIIRSRKETKK) are compositionally biased toward basic residues.

It belongs to the universal ribosomal protein uL2 family. Part of the 50S ribosomal subunit. Forms a bridge to the 30S subunit in the 70S ribosome.

One of the primary rRNA binding proteins. Required for association of the 30S and 50S subunits to form the 70S ribosome, for tRNA binding and peptide bond formation. It has been suggested to have peptidyltransferase activity; this is somewhat controversial. Makes several contacts with the 16S rRNA in the 70S ribosome. The sequence is that of Large ribosomal subunit protein uL2 from Mesomycoplasma hyopneumoniae (strain J / ATCC 25934 / NCTC 10110) (Mycoplasma hyopneumoniae).